The sequence spans 170 residues: Small ribosomal subunit protein uS5 (170 aa).

One can recognise an S5 DRBM domain in the interval 12 to 75; that stretch reads LSELLVSVRR…NAAKKSMIRV (64 aa).

The protein belongs to the universal ribosomal protein uS5 family. In terms of assembly, part of the 30S ribosomal subunit. Contacts proteins S4 and S8.

Functionally, with S4 and S12 plays an important role in translational accuracy. Located at the back of the 30S subunit body where it stabilizes the conformation of the head with respect to the body. This is Small ribosomal subunit protein uS5 from Wolbachia pipientis wMel.